We begin with the raw amino-acid sequence, 447 residues long: 2-oxoadipate dioxygenase/decarboxylase (447 aa).

Positions 68, 72, and 224 each coordinate 2-oxoadipate. His68 is a Fe(2+) binding site. Fe(2+) is bound by residues His224 and Glu290. 2-oxoadipate is bound at residue Val391.

The protein belongs to the 2-oxoadipate dioxygenase/decarboxylase family. Fe(2+) serves as cofactor.

It carries out the reaction 2-oxoadipate + O2 = (R)-2-hydroxyglutarate + CO2. Functionally, catalyzes the decarboxylation and hydroxylation of 2-oxoadipate (2OA) to form D-2-hydroxyglutarate (D-2-HGA). This chain is 2-oxoadipate dioxygenase/decarboxylase (ydcJ), found in Escherichia coli (strain K12).